The chain runs to 237 residues: Phosphoribosylaminoimidazole-succinocarboxamide synthase (237 aa).

It belongs to the SAICAR synthetase family.

It carries out the reaction 5-amino-1-(5-phospho-D-ribosyl)imidazole-4-carboxylate + L-aspartate + ATP = (2S)-2-[5-amino-1-(5-phospho-beta-D-ribosyl)imidazole-4-carboxamido]succinate + ADP + phosphate + 2 H(+). It participates in purine metabolism; IMP biosynthesis via de novo pathway; 5-amino-1-(5-phospho-D-ribosyl)imidazole-4-carboxamide from 5-amino-1-(5-phospho-D-ribosyl)imidazole-4-carboxylate: step 1/2. This Shigella dysenteriae serotype 1 (strain Sd197) protein is Phosphoribosylaminoimidazole-succinocarboxamide synthase.